The sequence spans 256 residues: MLSRVVLSAAATAAPCLKNAAVLGPGVLQATRVFHTGQPRLAPLPPLPEYGGKVRLGLIPEEFFQFLYPKTGVTGPYVLGTGLSLYFLSKEIYVITPETFSTISVVGLIVYVIKKYGASIGEFIDKLNEEKIAQLEEIKQSSMKQIQDAINREKAQQALVQKRHYLFDVQRNNIALALEVTYRERLHKAYKEVKNRLDYHISVQDMMRRKEGEHMINWVEKHVIQSISAQQEKETIAKCIGDLKMLAKKAQAQPIM.

The transit peptide at 1–42 directs the protein to the mitochondrion; sequence MLSRVVLSAAATAAPCLKNAAVLGPGVLQATRVFHTGQPRLA. The residue at position 131 (Lys131) is an N6-succinyllysine. Residues Lys139, Lys154, Lys162, Lys221, Lys233, and Lys244 each carry the N6-acetyllysine modification.

This sequence belongs to the eukaryotic ATPase B chain family. As to quaternary structure, component of the ATP synthase complex composed at least of ATP5F1A/subunit alpha, ATP5F1B/subunit beta, ATP5MC1/subunit c (homooctomer), MT-ATP6/subunit a, MT-ATP8/subunit 8, ATP5ME/subunit e, ATP5MF/subunit f, ATP5MG/subunit g, ATP5MK/subunit k, ATP5MJ/subunit j, ATP5F1C/subunit gamma, ATP5F1D/subunit delta, ATP5F1E/subunit epsilon, ATP5PF/subunit F6, ATP5PB/subunit b, ATP5PD/subunit d, ATP5PO/subunit OSCP. ATP synthase complex consists of a soluble F(1) head domain (subunits alpha(3) and beta(3)) - the catalytic core - and a membrane F(0) domain - the membrane proton channel (subunits c, a, 8, e, f, g, k and j). These two domains are linked by a central stalk (subunits gamma, delta, and epsilon) rotating inside the F1 region and a stationary peripheral stalk (subunits F6, b, d, and OSCP).

Its subcellular location is the mitochondrion. It is found in the mitochondrion inner membrane. Its function is as follows. Subunit b, of the mitochondrial membrane ATP synthase complex (F(1)F(0) ATP synthase or Complex V) that produces ATP from ADP in the presence of a proton gradient across the membrane which is generated by electron transport complexes of the respiratory chain. ATP synthase complex consist of a soluble F(1) head domain - the catalytic core - and a membrane F(1) domain - the membrane proton channel. These two domains are linked by a central stalk rotating inside the F(1) region and a stationary peripheral stalk. During catalysis, ATP synthesis in the catalytic domain of F(1) is coupled via a rotary mechanism of the central stalk subunits to proton translocation. In vivo, can only synthesize ATP although its ATP hydrolase activity can be activated artificially in vitro. Part of the complex F(0) domain. Part of the complex F(0) domain and the peripheric stalk, which acts as a stator to hold the catalytic alpha(3)beta(3) subcomplex and subunit a/ATP6 static relative to the rotary elements. This chain is ATP synthase peripheral stalk subunit b, mitochondrial, found in Rattus norvegicus (Rat).